The sequence spans 814 residues: Cadherin-15 (814 aa).

The first 21 residues, 1–21 (MDAAFLLVLGLLAQSLCLSLG), serve as a signal peptide directing secretion. A propeptide spanning residues 22–60 (VPGWRRPTTLYPWRRAPALSRVRRAWVIPPISVSENHKR) is cleaved from the precursor. 5 Cadherin domains span residues 61–152 (LPYP…RPAF), 153–260 (LQEA…APEF), 261–375 (TRDE…PPVF), 376–481 (QENP…DHAP), and 482–590 (VLAP…VCLP). Topologically, residues 61 to 606 (LPYPLVQIKS…AGGTGLSLGA (546 aa)) are extracellular. N-linked (GlcNAc...) asparagine glycosylation occurs at Asn-227. Residues Asn-531, Asn-538, and Asn-576 are each glycosylated (N-linked (GlcNAc...) asparagine). A helical membrane pass occupies residues 607 to 626 (LVIVLASALLLLVLVLLVAL). The Cytoplasmic portion of the chain corresponds to 627–814 (RARFWKQSRG…LLPRHRGRTA (188 aa)). Disordered stretches follow at residues 636–663 (GKGLLHGPQDDLRDNVLNYDEQGGGEED) and 676–703 (TALSLPLGPPPLRRDAPQGRLHPQPPRV).

In terms of tissue distribution, expressed in the brain and cerebellum.

It localises to the cell membrane. Functionally, cadherins are calcium-dependent cell adhesion proteins. They preferentially interact with themselves in a homophilic manner in connecting cells; cadherins may thus contribute to the sorting of heterogeneous cell types. M-cadherin is part of the myogenic program and may provide a trigger for terminal muscle differentiation. The protein is Cadherin-15 (CDH15) of Homo sapiens (Human).